Here is a 300-residue protein sequence, read N- to C-terminus: uncharacterized protein (300 aa).

It belongs to the chlamydial CPn_0593/CT_474/TC_0759 family.

This is an uncharacterized protein from Chlamydia muridarum (strain MoPn / Nigg).